A 107-amino-acid polypeptide reads, in one-letter code: Large ribosomal subunit protein uL24 (107 aa).

This sequence belongs to the universal ribosomal protein uL24 family. Part of the 50S ribosomal subunit.

In terms of biological role, one of two assembly initiator proteins, it binds directly to the 5'-end of the 23S rRNA, where it nucleates assembly of the 50S subunit. One of the proteins that surrounds the polypeptide exit tunnel on the outside of the subunit. This is Large ribosomal subunit protein uL24 from Thermoanaerobacter pseudethanolicus (strain ATCC 33223 / 39E) (Clostridium thermohydrosulfuricum).